An 817-amino-acid polypeptide reads, in one-letter code: LPS-assembly protein LptD (817 aa).

The signal sequence occupies residues 1 to 26; sequence MPALVVSPDLVRGAAGASAAPTPAPA. The tract at residues 1 to 101 is disordered; that stretch reads MPALVVSPDL…ARKPGSTEVR (101 aa). Low complexity predominate over residues 13–90; sequence GAAGASAAPT…PAASASPADA (78 aa).

Belongs to the LptD family. In terms of assembly, component of the lipopolysaccharide transport and assembly complex. Interacts with LptE and LptA.

Its subcellular location is the cell outer membrane. In terms of biological role, together with LptE, is involved in the assembly of lipopolysaccharide (LPS) at the surface of the outer membrane. The chain is LPS-assembly protein LptD from Azoarcus sp. (strain BH72).